Reading from the N-terminus, the 287-residue chain is Ribosomal RNA small subunit methyltransferase A (287 aa).

S-adenosyl-L-methionine-binding residues include Asn18, Leu20, Gly45, Glu66, Asp91, and Asn118.

The protein belongs to the class I-like SAM-binding methyltransferase superfamily. rRNA adenine N(6)-methyltransferase family. RsmA subfamily.

The protein localises to the cytoplasm. It carries out the reaction adenosine(1518)/adenosine(1519) in 16S rRNA + 4 S-adenosyl-L-methionine = N(6)-dimethyladenosine(1518)/N(6)-dimethyladenosine(1519) in 16S rRNA + 4 S-adenosyl-L-homocysteine + 4 H(+). In terms of biological role, specifically dimethylates two adjacent adenosines (A1518 and A1519) in the loop of a conserved hairpin near the 3'-end of 16S rRNA in the 30S particle. May play a critical role in biogenesis of 30S subunits. This Haemophilus influenzae (strain PittEE) protein is Ribosomal RNA small subunit methyltransferase A.